A 121-amino-acid polypeptide reads, in one-letter code: Small ribosomal subunit protein uS13 (121 aa).

Positions 92–121 are disordered; it reads RKGLPVRGQSSKTNARTVKGPRKTVANKKK. Residues 110–121 show a composition bias toward basic residues; it reads KGPRKTVANKKK.

It belongs to the universal ribosomal protein uS13 family. As to quaternary structure, part of the 30S ribosomal subunit. Forms a loose heterodimer with protein S19. Forms two bridges to the 50S subunit in the 70S ribosome.

In terms of biological role, located at the top of the head of the 30S subunit, it contacts several helices of the 16S rRNA. In the 70S ribosome it contacts the 23S rRNA (bridge B1a) and protein L5 of the 50S subunit (bridge B1b), connecting the 2 subunits; these bridges are implicated in subunit movement. Contacts the tRNAs in the A and P-sites. The chain is Small ribosomal subunit protein uS13 from Mycoplasma mycoides subsp. mycoides SC (strain CCUG 32753 / NCTC 10114 / PG1).